The chain runs to 320 residues: 1-aminocyclopropane-1-carboxylate oxidase 2 (320 aa).

A coiled-coil region spans residues 111 to 143 (DEYRTAMKDFGKRLENLAEDLLDLLCENLGLEK). Positions 156-256 (PTFGTKVSNY…RMSVASFYNP (101 aa)) constitute a Fe2OG dioxygenase domain. Fe cation is bound by residues His180, Asp182, and His237. A 2-oxoglutarate-binding site is contributed by Arg247.

This sequence belongs to the iron/ascorbate-dependent oxidoreductase family. The cofactor is Fe(2+). It depends on Cu(2+) as a cofactor. In terms of tissue distribution, expressed in vegetative tissues. Constitutively expressed in leaves and blades. In ethylene exposed etiolated seedlings, localized in cells at the outer side of the exaggerated hook in an ethylene-dependent manner and following an ethylene sensitive pattern. Also detected in the root tip when treated by ethylene.

It catalyses the reaction 1-aminocyclopropane-1-carboxylate + L-ascorbate + O2 = ethene + L-dehydroascorbate + hydrogen cyanide + CO2 + 2 H2O. Its pathway is alkene biosynthesis; ethylene biosynthesis via S-adenosyl-L-methionine; ethylene from S-adenosyl-L-methionine: step 2/2. Functionally, enzyme involved in the ethylene biosynthesis. Required to mediate the 1-aminocyclopropane-1-carboxylic acid (ACC)-mediated reversion of the ABA-induced inhibition of seed germination via endosperm rupture. May promote stem elongation by maximizing the extensibility cells, possibly by activating ethylene biosynthesis, in response to very-long-chain fatty acids (VLCFAs C20:0 to C30:0). The protein is 1-aminocyclopropane-1-carboxylate oxidase 2 (ACO2) of Arabidopsis thaliana (Mouse-ear cress).